The primary structure comprises 261 residues: HLA class II histocompatibility antigen, DQ beta 1 chain (261 aa).

A signal peptide spans 1–32; the sequence is MSWKKALRIPGGLRAATVTLMLAMLSTPVAEG. Residues 33–126 form a beta-1 region; the sequence is RDSPEDFVYQ…LELRTTLQRR (94 aa). The Extracellular portion of the chain corresponds to 33–230; the sequence is RDSPEDFVYQ…RAQSESAQSK (198 aa). Disulfide bonds link cysteine 47/cysteine 111 and cysteine 149/cysteine 205. A glycan (N-linked (GlcNAc...) asparagine) is linked at asparagine 51. Residues 127–220 are beta-2; sequence VEPTVTISPS…SLQNPITVEW (94 aa). Residues 129–217 enclose the Ig-like C1-type domain; sequence PTVTISPSRT…EHPSLQNPIT (89 aa). Residues 221 to 230 are connecting peptide; that stretch reads RAQSESAQSK. A helical transmembrane segment spans residues 231 to 251; sequence MLSGIGGFVLGLIFLGLGLII. The Cytoplasmic portion of the chain corresponds to 252–261; the sequence is HHRSQKGLLH.

Belongs to the MHC class II family. In terms of assembly, heterodimer of an alpha and a beta subunit; also referred as MHC class II molecule. In the endoplasmic reticulum (ER) it forms a heterononamer; 3 MHC class II molecules bind to a CD74 homotrimer (also known as invariant chain or HLA class II histocompatibility antigen gamma chain). In the endosomal/lysosomal system; CD74 undergoes sequential degradation by various proteases; leaving a small fragment termed CLIP on each MHC class II molecule. MHC class II molecule interacts with HLA_DM, and HLA_DO in B-cells, in order to release CLIP and facilitate the binding of antigenic peptides.

The protein localises to the cell membrane. It is found in the endoplasmic reticulum membrane. Its subcellular location is the golgi apparatus. The protein resides in the trans-Golgi network membrane. It localises to the endosome membrane. The protein localises to the lysosome membrane. In terms of biological role, binds peptides derived from antigens that access the endocytic route of antigen presenting cells (APC) and presents them on the cell surface for recognition by the CD4 T-cells. The peptide binding cleft accommodates peptides of 10-30 residues. The peptides presented by MHC class II molecules are generated mostly by degradation of proteins that access the endocytic route, where they are processed by lysosomal proteases and other hydrolases. Exogenous antigens that have been endocytosed by the APC are thus readily available for presentation via MHC II molecules, and for this reason this antigen presentation pathway is usually referred to as exogenous. As membrane proteins on their way to degradation in lysosomes as part of their normal turn-over are also contained in the endosomal/lysosomal compartments, exogenous antigens must compete with those derived from endogenous components. Autophagy is also a source of endogenous peptides, autophagosomes constitutively fuse with MHC class II loading compartments. In addition to APCs, other cells of the gastrointestinal tract, such as epithelial cells, express MHC class II molecules and CD74 and act as APCs, which is an unusual trait of the GI tract. To produce a MHC class II molecule that presents an antigen, three MHC class II molecules (heterodimers of an alpha and a beta chain) associate with a CD74 trimer in the ER to form a heterononamer. Soon after the entry of this complex into the endosomal/lysosomal system where antigen processing occurs, CD74 undergoes a sequential degradation by various proteases, including CTSS and CTSL, leaving a small fragment termed CLIP (class-II-associated invariant chain peptide). The removal of CLIP is facilitated by HLA-DM via direct binding to the alpha-beta-CLIP complex so that CLIP is released. HLA-DM stabilizes MHC class II molecules until primary high affinity antigenic peptides are bound. The MHC II molecule bound to a peptide is then transported to the cell membrane surface. In B-cells, the interaction between HLA-DM and MHC class II molecules is regulated by HLA-DO. Primary dendritic cells (DCs) also to express HLA-DO. Lysosomal microenvironment has been implicated in the regulation of antigen loading into MHC II molecules, increased acidification produces increased proteolysis and efficient peptide loading. The sequence is that of HLA class II histocompatibility antigen, DQ beta 1 chain (HLA-DQB1) from Homo sapiens (Human).